The chain runs to 86 residues: Small ribosomal subunit protein uS17 (86 aa).

This sequence belongs to the universal ribosomal protein uS17 family. Part of the 30S ribosomal subunit.

Functionally, one of the primary rRNA binding proteins, it binds specifically to the 5'-end of 16S ribosomal RNA. This Helicobacter acinonychis (strain Sheeba) protein is Small ribosomal subunit protein uS17.